The following is a 351-amino-acid chain: Cell shape-determining protein MreB (351 aa).

ATP contacts are provided by residues 20 to 22, 169 to 171, 217 to 220, and 299 to 302; these read TAN, GGT, ERIK, and GGAL.

The protein belongs to the FtsA/MreB family. Forms polymers.

It is found in the cytoplasm. In terms of biological role, forms membrane-associated dynamic filaments that are essential for cell shape determination. Acts by regulating cell wall synthesis and cell elongation, and thus cell shape. A feedback loop between cell geometry and MreB localization may maintain elongated cell shape by targeting cell wall growth to regions of negative cell wall curvature. The polypeptide is Cell shape-determining protein MreB (Haemophilus influenzae (strain ATCC 51907 / DSM 11121 / KW20 / Rd)).